The sequence spans 348 residues: tRNA-specific 2-thiouridylase MnmA (348 aa).

ATP is bound by residues 8 to 15 (LLSGGVDS) and methionine 34. Cysteine 105 (nucleophile) is an active-site residue. Cysteine 105 and cysteine 197 are disulfide-bonded. Position 129 (glycine 129) interacts with ATP. An interaction with tRNA region spans residues 147–149 (KDQ). Cysteine 197 functions as the Cysteine persulfide intermediate in the catalytic mechanism.

Belongs to the MnmA/TRMU family.

The protein localises to the cytoplasm. The enzyme catalyses S-sulfanyl-L-cysteinyl-[protein] + uridine(34) in tRNA + AH2 + ATP = 2-thiouridine(34) in tRNA + L-cysteinyl-[protein] + A + AMP + diphosphate + H(+). Functionally, catalyzes the 2-thiolation of uridine at the wobble position (U34) of tRNA, leading to the formation of s(2)U34. This chain is tRNA-specific 2-thiouridylase MnmA, found in Fervidobacterium nodosum (strain ATCC 35602 / DSM 5306 / Rt17-B1).